Consider the following 1534-residue polypeptide: Ribosome-binding protein 1 (1534 aa).

The Lumenal portion of the chain corresponds to 1-7 (MDIYDTQ). The chain crosses the membrane as a helical span at residues 8 to 28 (TLGVMVFGGFMVVSAIGIFLV). The Cytoplasmic segment spans residues 29-1534 (STFSMKETSY…DSSSKEGTSV (1506 aa)). Disordered regions lie at residues 45 to 91 (QRKE…PAPN) and 125 to 152 (PAMP…VEPA). Positions 52 to 63 (THHQKVEKKKKE) are enriched in basic residues. Over residues 64 to 88 (KTVEKKGKTKKKEEKPNGKIPDHEP) the composition is skewed to basic and acidic residues. The span at 125–135 (PAMPQEKLAPS) shows a compositional bias: low complexity. Lysine 148 participates in a covalent cross-link: Glycyl lysine isopeptide (Lys-Gly) (interchain with G-Cter in SUMO2). A phosphoserine mark is found at serine 159 and serine 165. Disordered regions lie at residues 173–780 (APKE…PLYL), 968–987 (KELV…RKAL), and 1021–1082 (RELC…RAEN). The span at 175-194 (KEVPMVVVPPVGAKAGTPAT) shows a compositional bias: low complexity. 54 consecutive repeat copies span residues 197–206 (AQGKKAEGAQ), 207–216 (NQSRKAEGAP), 217–226 (NQGKKAEGAL), 227–236 (NQGKKAEGAQ), 237–246 (NQGKKVEVAP), 247–256 (NQGKKAEGGQ), 257–266 (NQGKKVEGAQ), 267–276 (NQGKKAEGTP), 277–286 (NQGKKAEGAP), 287–296 (NQGKKTDGAP), 297–306 (NQGKKSEGAP), 307–316 (NQGKKAEGAQ), 317–326 (NQGKKVEVAP), 327–336 (NQGKKAEGGQ), 337–346 (NQGKKVEGAQ), 347–356 (NQGKKAEGTP), 357–366 (NQGKKAEGAP), 367–376 (NQGKKTDGAP), 377–386 (NQGKKSEGAP), 387–396 (NQGKKVEGAQ), 397–406 (NQGKKVEGVQ), 407–416 (NQGKKAEGAQ), 417–426 (NQGKKAEGTS), 427–436 (SQGRKEEGTP), 437–446 (NLGKKAEGSP), 447–456 (NQGKKVEVVQ), 457–466 (NQSKKVEGAP), 467–476 (NQGKKAEGSQ), 477–486 (NQGKKTEGAS), 487–496 (NQGKKVDGAQ), 497–506 (NQGKKAEGAP), 507–516 (NQGKKVEGAQ), 517–526 (NQGKKAEGTP), 527–536 (NQGKKAEGAQ), 537–546 (NQGKKAEGAP), 547–556 (NQGKKAEGAP), 557–566 (NQGKKAEGAP), 567–576 (NQGKKAEGAP), 577–586 (NQGKKAEAAP), 587–596 (NQGKKAEGAP), 597–606 (NQGKKAEGAP), 607–616 (NQGKKAEAAP), 617–626 (NQGKKAEGAP), 627–636 (NQGKKAEGAP), 637–646 (NQGKKAEGAP), 647–656 (NQGKKAEGAQ), 657–666 (NQGKKAEGAP), 667–676 (NQGKKADLVA), 677–686 (NQGTKAEGVA), 687–696 (GQGKKAEGAP), 697–706 (NQGKKGEGTP), 707–716 (NQGKKSEGSP), 717–726 (NQGKKVDASA), and 727–736 (NQSKRAESAP). A 54 X 10 AA tandem repeats of [NASG]-[QL]-[GS]-[KRT]-[KR]-[AVTSEG]-[ED]-[AGVLS]-[ATGSV]-[PQLSA] region spans residues 197–736 (AQGKKAEGAQ…NQSKRAESAP (540 aa)). At threonine 275 the chain carries Phosphothreonine. The segment covering 395 to 428 (AQNQGKKVEGVQNQGKKAEGAQNQGKKAEGTSSQ) has biased composition (polar residues). Polar residues predominate over residues 474-499 (GSQNQGKKTEGASNQGKKVDGAQNQG). Positions 705–718 (TPNQGKKSEGSPNQ) are enriched in polar residues. Residue serine 715 is modified to Phosphoserine. Serine 747 is modified (phosphoserine). A Glycyl lysine isopeptide (Lys-Gly) (interchain with G-Cter in SUMO1) cross-link involves residue lysine 752. Serine 1032 carries the post-translational modification Phosphoserine. The segment covering 1059–1080 (AEVKSKSEELSGLHGQLKEARA) has biased composition (basic and acidic residues). Lysine 1064 carries the post-translational modification N6-acetyllysine. Residues serine 1091 and serine 1110 each carry the phosphoserine modification. Disordered stretches follow at residues 1224-1251 (ELLK…ETQN), 1391-1416 (KSHV…VELK), and 1509-1534 (ERDT…GTSV). The segment covering 1509-1528 (ERDTVKKLQEQLDKTDDSSS) has biased composition (basic and acidic residues).

The protein localises to the endoplasmic reticulum membrane. In terms of biological role, acts as a ribosome receptor and mediates interaction between the ribosome and the endoplasmic reticulum membrane. The sequence is that of Ribosome-binding protein 1 (RRBP1) from Canis lupus familiaris (Dog).